Reading from the N-terminus, the 82-residue chain is Large ribosomal subunit protein bL31 (82 aa).

This sequence belongs to the bacterial ribosomal protein bL31 family. Type A subfamily. As to quaternary structure, part of the 50S ribosomal subunit.

Functionally, binds the 23S rRNA. This is Large ribosomal subunit protein bL31 from Rippkaea orientalis (strain PCC 8801 / RF-1) (Cyanothece sp. (strain PCC 8801)).